A 532-amino-acid chain; its full sequence is Phosphoenolpyruvate carboxykinase (ATP) (532 aa).

Substrate contacts are provided by R60, Y194, and K200. ATP-binding positions include K200, H219, and 237–245 (GLSGTGKTT). Residues K200 and H219 each coordinate Mn(2+). Residue D258 participates in Mn(2+) binding. ATP contacts are provided by E286, R324, and T449. Substrate is bound at residue R324.

The protein belongs to the phosphoenolpyruvate carboxykinase (ATP) family. It depends on Mn(2+) as a cofactor.

It is found in the cytoplasm. The catalysed reaction is oxaloacetate + ATP = phosphoenolpyruvate + ADP + CO2. Its pathway is carbohydrate biosynthesis; gluconeogenesis. Its function is as follows. Involved in the gluconeogenesis. Catalyzes the conversion of oxaloacetate (OAA) to phosphoenolpyruvate (PEP) through direct phosphoryl transfer between the nucleoside triphosphate and OAA. The polypeptide is Phosphoenolpyruvate carboxykinase (ATP) (Cereibacter sphaeroides (strain ATCC 17025 / ATH 2.4.3) (Rhodobacter sphaeroides)).